Here is a 236-residue protein sequence, read N- to C-terminus: Probable transcriptional regulatory protein UUR10_0292 (236 aa).

It belongs to the TACO1 family.

It is found in the cytoplasm. The chain is Probable transcriptional regulatory protein UUR10_0292 from Ureaplasma urealyticum serovar 10 (strain ATCC 33699 / Western).